Reading from the N-terminus, the 865-residue chain is Leucine--tRNA ligase (865 aa).

Residues 36-46 (PYPSGKIHMGH) carry the 'HIGH' region motif. The 'KMSKS' region signature appears at 608-612 (KMSKS). Lys611 provides a ligand contact to ATP.

The protein belongs to the class-I aminoacyl-tRNA synthetase family.

The protein localises to the cytoplasm. The enzyme catalyses tRNA(Leu) + L-leucine + ATP = L-leucyl-tRNA(Leu) + AMP + diphosphate. The polypeptide is Leucine--tRNA ligase (Wolbachia sp. subsp. Brugia malayi (strain TRS)).